Reading from the N-terminus, the 72-residue chain is Translation initiation factor IF-1 (72 aa).

Positions 1–72 (MSKEDVIELE…TRGRIVWRSK (72 aa)) constitute an S1-like domain.

Belongs to the IF-1 family. In terms of assembly, component of the 30S ribosomal translation pre-initiation complex which assembles on the 30S ribosome in the order IF-2 and IF-3, IF-1 and N-formylmethionyl-tRNA(fMet); mRNA recruitment can occur at any time during PIC assembly.

The protein resides in the cytoplasm. Its function is as follows. One of the essential components for the initiation of protein synthesis. Stabilizes the binding of IF-2 and IF-3 on the 30S subunit to which N-formylmethionyl-tRNA(fMet) subsequently binds. Helps modulate mRNA selection, yielding the 30S pre-initiation complex (PIC). Upon addition of the 50S ribosomal subunit IF-1, IF-2 and IF-3 are released leaving the mature 70S translation initiation complex. This chain is Translation initiation factor IF-1, found in Caldicellulosiruptor saccharolyticus (strain ATCC 43494 / DSM 8903 / Tp8T 6331).